Consider the following 1845-residue polypeptide: Proteasome activator complex subunit 4 (1845 aa).

Over residues 1-13 the composition is skewed to basic and acidic residues; the sequence is MEPAERAGGRDPL. The disordered stretch occupies residues 1-26; sequence MEPAERAGGRDPLEPGGRPGPDPQGF. HEAT repeat units follow at residues 475-519 and 1000-1039; these read PEGP…LVDC and NFCCRDIIPLVLGFLRPDRQDVTQQQFKGALYCLLGNHSG. Ser1123 bears the Phosphoserine mark. HEAT repeat units follow at residues 1181 to 1219 and 1356 to 1394; these read RVLPLRAIRFFVENLNHDAIVVRKMAISAVAGILKQLKR and DAFLPVLKPHLERLVADSHESTQRCVAEIIAGLIRGSKH. The residue at position 1616 (Ser1616) is a Phosphoserine. HEAT repeat units follow at residues 1638–1676 and 1682–1720; these read PHQVPLVLQVLNQTARSSSWHARYTVLTYLQTMVFYNLF and EDAVKDIRWLVISLLEDEQLEVREMAATTLSGLLQCNFL. Residues 1652–1740 form a bromodomain-like (BRDL) region; that stretch reads ARSSSWHARY…EQLCKTKLPK (89 aa).

The protein belongs to the BLM10 family. Homodimer. Component of the spermatoproteasome, a form of the proteasome specifically found in testis. Interacts with the 20S and 26S proteasomes. In terms of processing, phosphorylated.

The protein localises to the cytoplasm. It is found in the cytosol. It localises to the nucleus. The protein resides in the nucleus speckle. Its function is as follows. Associated component of the proteasome that specifically recognizes acetylated histones and promotes ATP- and ubiquitin-independent degradation of core histones during spermatogenesis and DNA damage response. Recognizes and binds acetylated histones via its bromodomain-like (BRDL) region and activates the proteasome by opening the gated channel for substrate entry. Binds to the core proteasome via its C-terminus, which occupies the same binding sites as the proteasomal ATPases, opening the closed structure of the proteasome via an active gating mechanism. Component of the spermatoproteasome, a form of the proteasome specifically found in testis: binds to acetylated histones and promotes degradation of histones, thereby participating actively to the exchange of histones during spermatogenesis. Also involved in DNA damage response in somatic cells, by promoting degradation of histones following DNA double-strand breaks. This Bos taurus (Bovine) protein is Proteasome activator complex subunit 4 (PSME4).